A 109-amino-acid polypeptide reads, in one-letter code: Small ribosomal subunit protein uS17 (109 aa).

It belongs to the universal ribosomal protein uS17 family. Part of the 30S ribosomal subunit.

In terms of biological role, one of the primary rRNA binding proteins, it binds specifically to the 5'-end of 16S ribosomal RNA. The protein is Small ribosomal subunit protein uS17 of Methanococcus maripaludis (strain DSM 14266 / JCM 13030 / NBRC 101832 / S2 / LL).